A 441-amino-acid polypeptide reads, in one-letter code: MSRNFSNEQFSVNLEEQPGCVVSAEVKTTPQLLDKLHKQAIKKIKKDVILPGFRKGKAPDGIIVSRYPSQVTKELNQLLIQSAYQALASVGDRRPLSPQAIKSTSVTKADINEGGQVNFTYEAFPTISDIPWDKLSLSEEPAVKDITDEEMEKGLQNISYFFATKTPVTRTSQEGDFISLSLHVSKQNEEGVPTPIFENKYFKLCEEEMTDAFKTKFLGISAGHRVTEIIASPEIQSFLNGDVLTFTVNAVIEVVAPELDDDKARQLQAESLEDLKKKLRIQLENQAKDRQHQQCFAEAENALASIIDFDLPTSMLEDRLAMLTRAKLLNARLIQYCSDEELENKKSDLLKEAELEAKKTLKLFFLANKIFNDEKLVISREELQYMMDVCSRERYGMQPPRDISKEALQELVMAARDRLTYHKAMEKVLAKAKESATAPSA.

The PPIase FKBP-type domain occupies 175 to 257; the sequence is GDFISLSLHV…VNAVIEVVAP (83 aa).

Belongs to the FKBP-type PPIase family. Tig subfamily.

The protein localises to the cytoplasm. The catalysed reaction is [protein]-peptidylproline (omega=180) = [protein]-peptidylproline (omega=0). Involved in protein export. Acts as a chaperone by maintaining the newly synthesized protein in an open conformation. Functions as a peptidyl-prolyl cis-trans isomerase. The polypeptide is Trigger factor (Chlamydia abortus (strain DSM 27085 / S26/3) (Chlamydophila abortus)).